Here is a 555-residue protein sequence, read N- to C-terminus: GPI-anchor transamidase component PIGS (555 aa).

At 2 to 18 (AAAGAAATHLEVARGKR) the chain is on the cytoplasmic side. A cardiolipin is bound by residues arginine 15 and arginine 18. A helical transmembrane segment spans residues 19–39 (AALFFAAVAIVLGLPLWWKTT). Residues 40 to 517 (ETYRASLPYS…LHLLYFPDDQ (478 aa)) are Lumenal-facing. Residues asparagine 267 and asparagine 370 are each glycosylated (N-linked (GlcNAc...) asparagine). The helical transmembrane segment at 518 to 532 (KFAIYIPLFLPMAVP) threads the bilayer. Over 533–555 (ILLSLVKIFLETRKSWRKPEKTD) the chain is Cytoplasmic.

Belongs to the PIGS family. As to quaternary structure, heteropentamer. Part of the GPI-anchor transamidase complex, consisting of PIGK, PIGT, PIGS, PIGU and GAA1.

It is found in the endoplasmic reticulum membrane. It participates in glycolipid biosynthesis; glycosylphosphatidylinositol-anchor biosynthesis. Functionally, component of the glycosylphosphatidylinositol-anchor (GPI-anchor) transamidase (GPI-T) complex that catalyzes the formation of the linkage between a proprotein and a GPI-anchor and participates in GPI anchored protein biosynthesis. The chain is GPI-anchor transamidase component PIGS from Homo sapiens (Human).